Here is a 389-residue protein sequence, read N- to C-terminus: Succinate--CoA ligase [ADP-forming] subunit beta (389 aa).

Residues 9-244 (KEILRKFGVA…LDEEDPAEVE (236 aa)) enclose the ATP-grasp domain. ATP is bound by residues K46, 53-55 (GRG), E99, A102, and E107. Residues N199 and D213 each coordinate Mg(2+). Substrate contacts are provided by residues N264 and 321-323 (GIM).

The protein belongs to the succinate/malate CoA ligase beta subunit family. Heterotetramer of two alpha and two beta subunits. Mg(2+) is required as a cofactor.

The enzyme catalyses succinate + ATP + CoA = succinyl-CoA + ADP + phosphate. It catalyses the reaction GTP + succinate + CoA = succinyl-CoA + GDP + phosphate. It participates in carbohydrate metabolism; tricarboxylic acid cycle; succinate from succinyl-CoA (ligase route): step 1/1. In terms of biological role, succinyl-CoA synthetase functions in the citric acid cycle (TCA), coupling the hydrolysis of succinyl-CoA to the synthesis of either ATP or GTP and thus represents the only step of substrate-level phosphorylation in the TCA. The beta subunit provides nucleotide specificity of the enzyme and binds the substrate succinate, while the binding sites for coenzyme A and phosphate are found in the alpha subunit. This chain is Succinate--CoA ligase [ADP-forming] subunit beta, found in Paraburkholderia xenovorans (strain LB400).